Reading from the N-terminus, the 967-residue chain is Phosphoenolpyruvate carboxylase 2 (967 aa).

Phosphoserine is present on Ser13. Residues His174 and Lys602 contribute to the active site.

It belongs to the PEPCase type 1 family. In terms of assembly, homotetramer. Requires Mg(2+) as cofactor.

It localises to the cytoplasm. The catalysed reaction is oxaloacetate + phosphate = phosphoenolpyruvate + hydrogencarbonate. It participates in photosynthesis; C3 acid pathway. By light-reversible phosphorylation. Its function is as follows. Through the carboxylation of phosphoenolpyruvate (PEP) it forms oxaloacetate, a four-carbon dicarboxylic acid source for the tricarboxylic acid cycle. The chain is Phosphoenolpyruvate carboxylase 2 (PEP4) from Zea mays (Maize).